A 589-amino-acid chain; its full sequence is Aspartate--tRNA ligase (589 aa).

Glu-172 is an L-aspartate binding site. Residues 196 to 199 are aspartate; sequence QLFK. Residue Arg-218 coordinates L-aspartate. ATP contacts are provided by residues 218–220 and Gln-227; that span reads RDE. His-449 is an L-aspartate binding site. Residue Glu-483 participates in ATP binding. Residue Arg-490 participates in L-aspartate binding. 535–538 serves as a coordination point for ATP; it reads GLDR.

The protein belongs to the class-II aminoacyl-tRNA synthetase family. Type 1 subfamily. In terms of assembly, homodimer.

It localises to the cytoplasm. It catalyses the reaction tRNA(Asp) + L-aspartate + ATP = L-aspartyl-tRNA(Asp) + AMP + diphosphate. In terms of biological role, catalyzes the attachment of L-aspartate to tRNA(Asp) in a two-step reaction: L-aspartate is first activated by ATP to form Asp-AMP and then transferred to the acceptor end of tRNA(Asp). This Actinobacillus succinogenes (strain ATCC 55618 / DSM 22257 / CCUG 43843 / 130Z) protein is Aspartate--tRNA ligase.